We begin with the raw amino-acid sequence, 508 residues long: Light-independent protochlorophyllide reductase subunit B (508 aa).

D36 contacts [4Fe-4S] cluster. The active-site Proton donor is D294. Residue 429-430 (GM) coordinates substrate.

Belongs to the ChlB/BchB/BchZ family. As to quaternary structure, protochlorophyllide reductase is composed of three subunits; ChlL, ChlN and ChlB. Forms a heterotetramer of two ChlB and two ChlN subunits. The cofactor is [4Fe-4S] cluster.

It catalyses the reaction chlorophyllide a + oxidized 2[4Fe-4S]-[ferredoxin] + 2 ADP + 2 phosphate = protochlorophyllide a + reduced 2[4Fe-4S]-[ferredoxin] + 2 ATP + 2 H2O. The protein operates within porphyrin-containing compound metabolism; chlorophyll biosynthesis (light-independent). Component of the dark-operative protochlorophyllide reductase (DPOR) that uses Mg-ATP and reduced ferredoxin to reduce ring D of protochlorophyllide (Pchlide) to form chlorophyllide a (Chlide). This reaction is light-independent. The NB-protein (ChlN-ChlB) is the catalytic component of the complex. This chain is Light-independent protochlorophyllide reductase subunit B, found in Gloeothece citriformis (strain PCC 7424) (Cyanothece sp. (strain PCC 7424)).